We begin with the raw amino-acid sequence, 396 residues long: Pre-mRNA-splicing regulator WTAP (396 aa).

Methionine 1 is modified (N-acetylmethionine). A Phosphoserine modification is found at serine 14. Low complexity-rich tracts occupy residues 240 to 257, 278 to 291, and 304 to 316; these read QQQQSQASAPSTSRTTAS, SNGSSSRQRTSGSG, and PSSPGNGNKSSNS. The disordered stretch occupies residues 240-396; the sequence is QQQQSQASAP…SSVNVQGSVL (157 aa). 3 positions are modified to phosphoserine: serine 305, serine 306, and serine 341. The span at 340 to 356 shows a compositional bias: polar residues; sequence DSPTGSENSLTHQSNDT. Threonine 350 carries the post-translational modification Phosphothreonine. A compositionally biased stretch (basic and acidic residues) spans 357-368; that stretch reads DSSHDPQEEKAV. The span at 380–396 shows a compositional bias: polar residues; the sequence is HVQNGLDSSVNVQGSVL. Residue serine 388 is modified to Phosphoserine.

This sequence belongs to the fl(2)d family. Component of the WMM complex, a N6-methyltransferase complex composed of a catalytic subcomplex, named MAC, and of an associated subcomplex, named MACOM. The MAC subcomplex is composed of METTL3 and METTL14. The MACOM subcomplex is composed of WTAP, ZC3H13, CBLL1/HAKAI, VIRMA, and, in some cases of RBM15 (RBM15 or RBM15B). Interacts with WT1. Also a component of a MACOM-like complex, named WTAP complex, composed of WTAP, ZC3H13, CBLL1, VIRMA, RBM15, BCLAF1 and THRAP3. In terms of tissue distribution, ubiquitously expressed.

The protein localises to the nucleus speckle. Its subcellular location is the nucleus. The protein resides in the nucleoplasm. It localises to the cytoplasm. Its function is as follows. Associated component of the WMM complex, a complex that mediates N6-methyladenosine (m6A) methylation of RNAs, a modification that plays a role in the efficiency of mRNA splicing and RNA processing. Required for accumulation of METTL3 and METTL14 to nuclear speckle. Acts as a mRNA splicing regulator. Regulates G2/M cell-cycle transition by binding to the 3' UTR of CCNA2, which enhances its stability. Impairs WT1 DNA-binding ability and inhibits expression of WT1 target genes. The polypeptide is Pre-mRNA-splicing regulator WTAP (Homo sapiens (Human)).